The following is a 102-amino-acid chain: Nucleoid-associated protein WS1681 (102 aa).

This sequence belongs to the YbaB/EbfC family. As to quaternary structure, homodimer.

It is found in the cytoplasm. The protein localises to the nucleoid. Its function is as follows. Binds to DNA and alters its conformation. May be involved in regulation of gene expression, nucleoid organization and DNA protection. This is Nucleoid-associated protein WS1681 from Wolinella succinogenes (strain ATCC 29543 / DSM 1740 / CCUG 13145 / JCM 31913 / LMG 7466 / NCTC 11488 / FDC 602W) (Vibrio succinogenes).